Consider the following 366-residue polypeptide: Transcription initiation factor IIA subunit 1 (366 aa).

Disordered stretches follow at residues 56-82, 133-162, and 257-317; these read LSPD…AANA, EVNS…SSGQ, and QLDG…DSAE. The segment covering 146–162 has biased composition (low complexity); the sequence is SAASMMQKQQQAASSGQ. The span at 264–317 shows a compositional bias: acidic residues; the sequence is SSDEDESEESDDNIDNDDDDDLDKDDDEDAEHEDAAEEEPLNSEDDVTDEDSAE. A phosphoserine; by TAF1 mark is found at Ser-265 and Ser-306.

Belongs to the TFIIA subunit 1 family. In terms of assembly, belongs to the TFIID complex which is composed of TATA binding protein (Tbp) and a number of TBP-associated factors (Tafs). TFIIA is a heterodimer of a unprocessed large subunit 1 and a small subunit gamma. It was originally believed to be a heterotrimer of an alpha (p30), a beta (p20) and a gamma subunit (p14). Interacts with Tbp. Taf4 interacts with TFIIA-L when TFIIA-L is in complex with Tbp. The precursor form (48 kDa) is cleaved to give rise to the alpha (30 kDa) and beta (20 kDa) subunits.

The protein localises to the nucleus. Its function is as follows. TFIIA is a component of the transcription machinery of RNA polymerase II and plays an important role in transcriptional activation. TFIIA in a complex with TBP mediates transcriptional activity. This chain is Transcription initiation factor IIA subunit 1 (TfIIA-L), found in Drosophila melanogaster (Fruit fly).